The chain runs to 291 residues: Tumor necrosis factor ligand superfamily member 10 (291 aa).

Residues 1 to 17 (MPSSGALKDLSFSQHFR) lie on the Cytoplasmic side of the membrane. A helical; Signal-anchor for type II membrane protein transmembrane segment spans residues 18–38 (MMVICIVLLQVLLQAVSVAVT). The Extracellular segment spans residues 39–291 (YMYFTNEMKQ…ASFFGAFLIN (253 aa)). The N-linked (GlcNAc...) asparagine glycan is linked to Asn52. One can recognise a THD domain in the interval 126–290 (VAAHITGITR…EASFFGAFLI (165 aa)). Cys240 is a Zn(2+) binding site.

It belongs to the tumor necrosis factor family. In terms of assembly, homotrimer. One TNFSF10 homotrimer interacts with three TNFSF10A mononers. One TNFSF10 homotrimer interacts with three TNFSF10B mononers. Post-translationally, tyrosine phosphorylated by PKDCC/VLK. In terms of tissue distribution, widespread.

Its subcellular location is the cell membrane. The protein localises to the secreted. In terms of biological role, cytokine that binds to TNFRSF10A/TRAILR1, TNFRSF10B/TRAILR2, TNFRSF10C/TRAILR3, TNFRSF10D/TRAILR4 and possibly also to TNFRSF11B/OPG. Induces apoptosis. Its activity may be modulated by binding to the decoy receptors TNFRSF10C/TRAILR3, TNFRSF10D/TRAILR4 and TNFRSF11B/OPG that cannot induce apoptosis. The protein is Tumor necrosis factor ligand superfamily member 10 (Tnfsf10) of Mus musculus (Mouse).